A 210-amino-acid polypeptide reads, in one-letter code: Uracil phosphoribosyltransferase (210 aa).

5-phospho-alpha-D-ribose 1-diphosphate is bound by residues Arg-78, Arg-103, and 130–138 (DPMLATGGT). Uracil contacts are provided by residues Ile-193 and 198-200 (GDA). Asp-199 provides a ligand contact to 5-phospho-alpha-D-ribose 1-diphosphate.

This sequence belongs to the UPRTase family. It depends on Mg(2+) as a cofactor.

The catalysed reaction is UMP + diphosphate = 5-phospho-alpha-D-ribose 1-diphosphate + uracil. The protein operates within pyrimidine metabolism; UMP biosynthesis via salvage pathway; UMP from uracil: step 1/1. With respect to regulation, allosterically activated by GTP. Functionally, catalyzes the conversion of uracil and 5-phospho-alpha-D-ribose 1-diphosphate (PRPP) to UMP and diphosphate. The chain is Uracil phosphoribosyltransferase from Stenotrophomonas maltophilia (strain R551-3).